A 262-amino-acid chain; its full sequence is Acyl-[acyl-carrier-protein]--UDP-N-acetylglucosamine O-acyltransferase (262 aa).

The protein belongs to the transferase hexapeptide repeat family. LpxA subfamily. As to quaternary structure, homotrimer.

The protein localises to the cytoplasm. It catalyses the reaction a (3R)-hydroxyacyl-[ACP] + UDP-N-acetyl-alpha-D-glucosamine = a UDP-3-O-[(3R)-3-hydroxyacyl]-N-acetyl-alpha-D-glucosamine + holo-[ACP]. The protein operates within glycolipid biosynthesis; lipid IV(A) biosynthesis; lipid IV(A) from (3R)-3-hydroxytetradecanoyl-[acyl-carrier-protein] and UDP-N-acetyl-alpha-D-glucosamine: step 1/6. Involved in the biosynthesis of lipid A, a phosphorylated glycolipid that anchors the lipopolysaccharide to the outer membrane of the cell. This chain is Acyl-[acyl-carrier-protein]--UDP-N-acetylglucosamine O-acyltransferase, found in Paraburkholderia phytofirmans (strain DSM 17436 / LMG 22146 / PsJN) (Burkholderia phytofirmans).